A 448-amino-acid polypeptide reads, in one-letter code: Exodeoxyribonuclease 7 large subunit (448 aa).

This sequence belongs to the XseA family. As to quaternary structure, heterooligomer composed of large and small subunits.

It localises to the cytoplasm. The protein localises to the nucleoid. It catalyses the reaction Exonucleolytic cleavage in either 5'- to 3'- or 3'- to 5'-direction to yield nucleoside 5'-phosphates.. In terms of biological role, bidirectionally degrades single-stranded DNA into large acid-insoluble oligonucleotides, which are then degraded further into small acid-soluble oligonucleotides. The protein is Exodeoxyribonuclease 7 large subunit of Bacillus subtilis (strain 168).